We begin with the raw amino-acid sequence, 210 residues long: Oxygen-insensitive NADPH nitroreductase (210 aa).

150-155 is a binding site for NADP(+); it reads GVSLMG.

The protein belongs to the nitroreductase family.

In terms of biological role, reduction of a variety of nitroaromatic compounds using NADPH as source of reducing equivalents; two electrons are transferred. Capable of reducing metronidazole; inactive RdxA renders the bacterium resistant to this compound. The reduction of metronidazole generates hydroxylamine, a potent mutagen and bactericide. This Helicobacter pylori (strain ATCC 700392 / 26695) (Campylobacter pylori) protein is Oxygen-insensitive NADPH nitroreductase (rdxA).